The sequence spans 287 residues: Ribosomal RNA small subunit methyltransferase A (287 aa).

Residues asparagine 28, leucine 30, glycine 55, glutamate 76, aspartate 101, and asparagine 125 each coordinate S-adenosyl-L-methionine.

It belongs to the class I-like SAM-binding methyltransferase superfamily. rRNA adenine N(6)-methyltransferase family. RsmA subfamily.

It localises to the cytoplasm. The catalysed reaction is adenosine(1518)/adenosine(1519) in 16S rRNA + 4 S-adenosyl-L-methionine = N(6)-dimethyladenosine(1518)/N(6)-dimethyladenosine(1519) in 16S rRNA + 4 S-adenosyl-L-homocysteine + 4 H(+). Functionally, specifically dimethylates two adjacent adenosines (A1518 and A1519) in the loop of a conserved hairpin near the 3'-end of 16S rRNA in the 30S particle. May play a critical role in biogenesis of 30S subunits. This Alkaliphilus oremlandii (strain OhILAs) (Clostridium oremlandii (strain OhILAs)) protein is Ribosomal RNA small subunit methyltransferase A.